Reading from the N-terminus, the 325-residue chain is Hydroxymethylglutaryl-CoA lyase, mitochondrial (325 aa).

The N-terminal 27 residues, 1-27, are a transit peptide targeting the mitochondrion; the sequence is MAAMRKAVPRRLVGLASLRAVSTSSMG. Residues 33–300 form the Pyruvate carboxyltransferase domain; the sequence is VKIVEVGPRD…HTGVNLQKLL (268 aa). Arg41 contacts substrate. Residue Asp42 participates in a divalent metal cation binding. Lys48 bears the N6-acetyllysine; alternate mark. N6-succinyllysine; alternate is present on Lys48. At Lys111 the chain carries N6-acetyllysine. Lys137 and Lys179 each carry N6-acetyllysine; alternate. N6-succinyllysine; alternate is present on residues Lys137 and Lys179. A divalent metal cation contacts are provided by His233 and His235. Cys266 is an active-site residue. Position 275 (Asn275) interacts with a divalent metal cation. The short motif at 323 to 325 is the Microbody targeting signal element; the sequence is CKL. At Lys324 the chain carries N6-acetyllysine.

Belongs to the HMG-CoA lyase family. In terms of assembly, homodimer; disulfide-linked. Can also form homotetramers.

Its subcellular location is the mitochondrion matrix. It localises to the peroxisome. It carries out the reaction (3S)-3-hydroxy-3-methylglutaryl-CoA = acetoacetate + acetyl-CoA. It participates in metabolic intermediate metabolism; (S)-3-hydroxy-3-methylglutaryl-CoA degradation; acetoacetate from (S)-3-hydroxy-3-methylglutaryl-CoA: step 1/1. Functionally, mitochondrial 3-hydroxy-3-methylglutaryl-CoA lyase that catalyzes a cation-dependent cleavage of (S)-3-hydroxy-3-methylglutaryl-CoA into acetyl-CoA and acetoacetate, a key step in ketogenesis. Terminal step in leucine catabolism. Ketone bodies (beta-hydroxybutyrate, acetoacetate and acetone) are essential as an alternative source of energy to glucose, as lipid precursors and as regulators of metabolism. This Pongo abelii (Sumatran orangutan) protein is Hydroxymethylglutaryl-CoA lyase, mitochondrial (HMGCL).